The sequence spans 209 residues: Ion-translocating oxidoreductase complex subunit G (209 aa).

A helical transmembrane segment spans residues 9-29 (GITLAIFAALTTGLTAVVNSL). Residue T175 is modified to FMN phosphoryl threonine.

Belongs to the RnfG family. In terms of assembly, the complex is composed of six subunits: RnfA, RnfB, RnfC, RnfD, RnfE and RnfG. The cofactor is FMN.

The protein localises to the cell inner membrane. Functionally, part of a membrane-bound complex that couples electron transfer with translocation of ions across the membrane. The sequence is that of Ion-translocating oxidoreductase complex subunit G from Photorhabdus laumondii subsp. laumondii (strain DSM 15139 / CIP 105565 / TT01) (Photorhabdus luminescens subsp. laumondii).